The chain runs to 721 residues: Fatty acid oxidation complex subunit alpha (721 aa).

An enoyl-CoA hydratase/isomerase region spans residues 1-190 (MIYEGKAITV…KVGAVDAVVA (190 aa)). Asp297 serves as a coordination point for substrate. Residues 312 to 721 (KDVKQAAVLG…SFFGQASSEE (410 aa)) are 3-hydroxyacyl-CoA dehydrogenase. Residues Met325, Asp344, 401 to 403 (VVE), Lys408, and Ser430 contribute to the NAD(+) site. Residue His451 is the For 3-hydroxyacyl-CoA dehydrogenase activity of the active site. Asn454 is an NAD(+) binding site. 2 residues coordinate substrate: Asn501 and Tyr660.

It in the N-terminal section; belongs to the enoyl-CoA hydratase/isomerase family. This sequence in the C-terminal section; belongs to the 3-hydroxyacyl-CoA dehydrogenase family. In terms of assembly, heterotetramer of two alpha chains (FadB) and two beta chains (FadA).

It catalyses the reaction a (3S)-3-hydroxyacyl-CoA + NAD(+) = a 3-oxoacyl-CoA + NADH + H(+). It carries out the reaction a (3S)-3-hydroxyacyl-CoA = a (2E)-enoyl-CoA + H2O. The catalysed reaction is a 4-saturated-(3S)-3-hydroxyacyl-CoA = a (3E)-enoyl-CoA + H2O. The enzyme catalyses (3S)-3-hydroxybutanoyl-CoA = (3R)-3-hydroxybutanoyl-CoA. It catalyses the reaction a (3Z)-enoyl-CoA = a 4-saturated (2E)-enoyl-CoA. It carries out the reaction a (3E)-enoyl-CoA = a 4-saturated (2E)-enoyl-CoA. The protein operates within lipid metabolism; fatty acid beta-oxidation. In terms of biological role, involved in the aerobic and anaerobic degradation of long-chain fatty acids via beta-oxidation cycle. Catalyzes the formation of 3-oxoacyl-CoA from enoyl-CoA via L-3-hydroxyacyl-CoA. It can also use D-3-hydroxyacyl-CoA and cis-3-enoyl-CoA as substrate. In Pseudomonas syringae pv. syringae (strain B728a), this protein is Fatty acid oxidation complex subunit alpha.